The following is a 348-amino-acid chain: Hereditary hemochromatosis protein homolog (348 aa).

A signal peptide spans 1 to 22 (MGPRARPALFFLILLRTVAAQG). Residues 23 to 114 (RPPRSHSLRY…IMDNHNHSKE (92 aa)) are alpha-1. Over 23-306 (RPPRSHSLRY…WEPSLSNTLV (284 aa)) the chain is Extracellular. 3 N-linked (GlcNAc...) asparagine glycosylation sites follow: Asn-110, Asn-130, and Asn-234. Residues 115-205 (SHTLQVILGC…ELGRGVLDQQ (91 aa)) form an alpha-2 region. Disulfide bonds link Cys-124–Cys-187 and Cys-225–Cys-282. The interval 206-297 (VPPLVKVTHH…GLDQPLTATW (92 aa)) is alpha-3. The 90-residue stretch at 207-296 (PPLVKVTHHV…PGLDQPLTAT (90 aa)) folds into the Ig-like C1-type domain. The tract at residues 298 to 306 (EPSLSNTLV) is connecting peptide. The chain crosses the membrane as a helical span at residues 307-330 (TGVISGIAVCVIIFFIGILFRILR). Residues 331–348 (KRQASRGAMGDYVLGECE) lie on the Cytoplasmic side of the membrane.

Belongs to the MHC class I family. Binds TFR through the extracellular domain in a pH-dependent manner.

The protein resides in the cell membrane. Its function is as follows. Binds to transferrin receptor (TFR) and reduces its affinity for iron-loaded transferrin. This is Hereditary hemochromatosis protein homolog (HFE) from Ceratotherium simum (White rhinoceros).